A 459-amino-acid chain; its full sequence is Exodeoxyribonuclease 7 large subunit (459 aa).

The protein belongs to the XseA family. In terms of assembly, heterooligomer composed of large and small subunits.

The protein resides in the cytoplasm. It catalyses the reaction Exonucleolytic cleavage in either 5'- to 3'- or 3'- to 5'-direction to yield nucleoside 5'-phosphates.. In terms of biological role, bidirectionally degrades single-stranded DNA into large acid-insoluble oligonucleotides, which are then degraded further into small acid-soluble oligonucleotides. This chain is Exodeoxyribonuclease 7 large subunit, found in Pseudomonas aeruginosa (strain ATCC 15692 / DSM 22644 / CIP 104116 / JCM 14847 / LMG 12228 / 1C / PRS 101 / PAO1).